The chain runs to 64 residues: Large ribosomal subunit protein uL1 (64 aa).

It belongs to the universal ribosomal protein uL1 family. In terms of assembly, part of the 50S ribosomal subunit.

Binds directly to 23S rRNA. The L1 stalk is quite mobile in the ribosome, and is involved in E site tRNA release. In terms of biological role, protein L1 is also a translational repressor protein, it controls the translation of the L11 operon by binding to its mRNA. The chain is Large ribosomal subunit protein uL1 (rplA) from Streptomyces lavendulae.